A 512-amino-acid polypeptide reads, in one-letter code: Lysine--tRNA ligase (512 aa).

Residues glutamate 408 and glutamate 415 each coordinate Mg(2+).

The protein belongs to the class-II aminoacyl-tRNA synthetase family. As to quaternary structure, homodimer. Requires Mg(2+) as cofactor.

It is found in the cytoplasm. It carries out the reaction tRNA(Lys) + L-lysine + ATP = L-lysyl-tRNA(Lys) + AMP + diphosphate. This Prochlorococcus marinus (strain MIT 9215) protein is Lysine--tRNA ligase.